The primary structure comprises 400 residues: Enoyl-[acyl-carrier-protein] reductase [NADH] 2 (400 aa).

NAD(+)-binding positions include 48–53 (GASSGF), 75–76 (FE), 112–113 (DA), and 141–142 (LA). Position 228 (Tyr-228) interacts with substrate. The active-site Proton donor is the Tyr-238. NAD(+)-binding positions include Lys-247 and 276 to 278 (LVT).

This sequence belongs to the TER reductase family. In terms of assembly, monomer.

It catalyses the reaction a 2,3-saturated acyl-[ACP] + NAD(+) = a (2E)-enoyl-[ACP] + NADH + H(+). It participates in lipid metabolism; fatty acid biosynthesis. Involved in the final reduction of the elongation cycle of fatty acid synthesis (FAS II). Catalyzes the reduction of a carbon-carbon double bond in an enoyl moiety that is covalently linked to an acyl carrier protein (ACP). The sequence is that of Enoyl-[acyl-carrier-protein] reductase [NADH] 2 from Vibrio vulnificus (strain CMCP6).